A 47-amino-acid chain; its full sequence is AGALGESGASLSIVNSLDVLRNRLLLEIARKKAKEGANRNRQILLSL.

The protein belongs to the sauvagine/corticotropin-releasing factor/urotensin I family.

It localises to the secreted. Stimulates fluid secretion by the Malpighian tubules. Increases cyclic AMP production in Malpighian tubules. The sequence is that of Diuretic hormone 2 from Tenebrio molitor (Yellow mealworm beetle).